The sequence spans 247 residues: TM2 domain-containing protein 3 (247 aa).

Residues 1–29 (MAGGVLPLRGLRALCRVLLFLSQFCILSG) form the signal peptide. Residues 30–179 (GEQSQALAQS…RTFPKMLYCN (150 aa)) lie on the Extracellular side of the membrane. Residues N87, N122, N140, N157, N169, and N179 are each glycosylated (N-linked (GlcNAc...) asparagine). The chain crosses the membrane as a helical span at residues 180-200 (WTGGYKWSTALALSITLGGFG). The 48-residue stretch at 183-230 (GYKWSTALALSITLGGFGADRFYLGQWREGLGKLFSFGGLGIWTLIDV) folds into the TM2 domain. The Cytoplasmic portion of the chain corresponds to 201-215 (ADRFYLGQWREGLGK). The chain crosses the membrane as a helical span at residues 216–236 (LFSFGGLGIWTLIDVLLIGVG). The Extracellular portion of the chain corresponds to 237–247 (YVGPADGSLYI).

It belongs to the TM2 family. As to expression, widely expressed.

Its subcellular location is the membrane. In terms of biological role, probable positive regulator of Notch signaling. The polypeptide is TM2 domain-containing protein 3 (TM2D3) (Homo sapiens (Human)).